Here is a 456-residue protein sequence, read N- to C-terminus: Putative gluconeogenesis factor (456 aa).

This sequence belongs to the gluconeogenesis factor family.

The protein resides in the cytoplasm. Its function is as follows. Required for morphogenesis under gluconeogenic growth conditions. The sequence is that of Putative gluconeogenesis factor from Nostoc sp. (strain PCC 7120 / SAG 25.82 / UTEX 2576).